Here is a 780-residue protein sequence, read N- to C-terminus: WD repeat-containing protein 27 (780 aa).

13 WD repeats span residues 3–56 (TPPE…VWSS), 61–100 (HQLL…MWNV), 111–150 (LTPR…VMDV), 154–193 (SVLV…VWDF), 200–236 (YSSS…IFSL), 291–335 (FPIL…LASF), 342–385 (HFKE…VLEI), 500–540 (NLSR…VFNA), 544–582 (GPPA…VWSV), 588–639 (MLLL…RYKP), 644–685 (KPIF…VFDL), 691–738 (AAVL…LWDL), and 752–779 (AFCT…LSQP).

In Mus musculus (Mouse), this protein is WD repeat-containing protein 27 (Wdr27).